The chain runs to 312 residues: MQSQPDNVAYPMELQAVNKDGTVEVRVQGNVDNSSNERWDADVQKHEVAEAQEKPVGGINFWAPRELRLNYRDYVAEFLGNFVLIYIAKGAVITSLLVPDFGLLGLTIGIGVAVTMALYVSLGISGGHLNSAVTVGNAVFGDFPWRKVPGYIAAQMLGTFLGAACAYGVFADLLKAHGGGELIAFGEKGIAWVFAMYPAEGNGIFYPIFAELISTAVLLLCVCGIFDPNNSPAKGYETVAIGALVFVMVNNFGLASPLAMNPSLDFGPRVFGAILLGGEVFSHANYYFWVPLVVPFFGAILGLFLYKYFLPH.

6 helical membrane-spanning segments follow: residues 78-98, 104-124, 151-171, 203-223, 239-259, and 286-306; these read FLGNFVLIYIAKGAVITSLLV, LGLTIGIGVAVTMALYVSLGI, YIAAQMLGTFLGAACAYGVFA, GIFYPIFAELISTAVLLLCVC, VAIGALVFVMVNNFGLASPLA, and YYFWVPLVVPFFGAILGLFLY.

The protein belongs to the MIP/aquaporin (TC 1.A.8) family.

It is found in the membrane. It carries out the reaction glycerol(in) = glycerol(out). The enzyme catalyses H2O(in) = H2O(out). The catalysed reaction is urea(in) = urea(out). In terms of biological role, mediates water and glycerol transport across cell membranes. Permeable to urea. Permeable to methylamine/methylammonium. Permeable to dihydroxyacetone. The sequence is that of Aquaglyceroporin-2 from Trypanosoma brucei brucei.